We begin with the raw amino-acid sequence, 839 residues long: Taste receptor type 1 member 2 (839 aa).

The N-terminal stretch at 1–19 is a signal peptide; the sequence is MRPRATTICSLFFLLRVLA. The Extracellular portion of the chain corresponds to 20–566; sequence EPAKNSDFYL…AFLEWHEAPT (547 aa). N-linked (GlcNAc...) asparagine glycans are attached at residues asparagine 84, asparagine 127, asparagine 248, asparagine 292, asparagine 312, asparagine 368, asparagine 428, asparagine 487, and asparagine 527. A helical transmembrane segment spans residues 567–587; it reads IVVALLAALGFLSTLAILVIF. Residues 588–602 are Cytoplasmic-facing; it reads WRHFQTPMVRSAGGP. The helical transmembrane segment at 603–623 threads the bilayer; sequence MCFLMLTLLLVAYMVVPVYVG. Topologically, residues 624–635 are extracellular; the sequence is PPKVSTCFCRQA. The helical transmembrane segment at 636 to 656 threads the bilayer; the sequence is LFPLCFTICISCIAVRSFQIV. At 657-681 the chain is on the cytoplasmic side; it reads CVFKMASRFPRAYSYWVRYQGPYVS. Residues 682–702 form a helical membrane-spanning segment; that stretch reads MAFITVLKMVTVVIGMLATGL. Topologically, residues 703–727 are extracellular; that stretch reads NPTTRIDPDDPKIMIVSCNPNYRNS. Residues 728–748 traverse the membrane as a helical segment; sequence LFFNTGLDLLLSVVGFSFAYM. Residues 749-760 lie on the Cytoplasmic side of the membrane; the sequence is GKELPTNYNEAK. A helical transmembrane segment spans residues 761–781; sequence FITLSMTFYFTSSVSLCTFMS. Topologically, residues 782–784 are extracellular; the sequence is AYN. A helical membrane pass occupies residues 785 to 805; sequence GVLVTIMDLLVTVLNLLAISL. The Cytoplasmic portion of the chain corresponds to 806 to 839; sequence GYFGPKCYMILFYPERNTPAYFNSMIQGYTMRRD.

Belongs to the G-protein coupled receptor 3 family. TAS1R subfamily. Forms heterodimers with TAS1R3.

It is found in the cell membrane. Its function is as follows. Putative taste receptor. TAS1R2/TAS1R3 recognizes diverse natural and synthetic sweeteners. The polypeptide is Taste receptor type 1 member 2 (TAS1R2) (Papio hamadryas (Hamadryas baboon)).